A 905-amino-acid polypeptide reads, in one-letter code: Probable aromatic-L-amino-acid decarboxylase (905 aa).

The segment at 250-296 (YLNPIIKTPPHNERVPKMKTNISKTRKKKGKVSDASKDSRPSETKKE) is disordered. The span at 280 to 296 (KVSDASKDSRPSETKKE) shows a compositional bias: basic and acidic residues. Positions 492 and 591 each coordinate pyridoxal 5'-phosphate. At K648 the chain carries N6-(pyridoxal phosphate)lysine. The segment at 861 to 905 (HTAEYADPPGKSNKSPQVAAKGELPSAAPPSSRTPNSDISEKSDR) is disordered. Polar residues predominate over residues 889–898 (PPSSRTPNSD).

The protein belongs to the group II decarboxylase family. In terms of assembly, homodimer. Pyridoxal 5'-phosphate serves as cofactor.

The enzyme catalyses L-dopa + H(+) = dopamine + CO2. The catalysed reaction is 5-hydroxy-L-tryptophan + H(+) = serotonin + CO2. The protein operates within catecholamine biosynthesis; dopamine biosynthesis; dopamine from L-tyrosine: step 2/2. In terms of biological role, catalyzes the decarboxylation of L-3,4-dihydroxyphenylalanine (DOPA) to dopamine, L-5-hydroxytryptophan to serotonin and L-tryptophan to tryptamine. In Caenorhabditis elegans, this protein is Probable aromatic-L-amino-acid decarboxylase (hdl-1).